A 444-amino-acid chain; its full sequence is MWLFTVNQVLRKMQRRHSSNTDNIPPERNRSQALSSEASVDEGGVFESLKAEAASPPALFSGLSGSLPTSSFPSSLVLGSSAGGGDVFIQMPASREEGGGRGEGGAYHHRQPHHHFHHGGHRGGSLLQHVGGDHRGHSEEGGDEQPGTPAPALSELKAVICWLQKGLPFILILLAKLCFQHKLGIAVCIGMASTFAYANSTLREQVSLKEKRSVLVILWILAFLAGNTLYVLYTFSSQQLYNSLIFLKPNLETLDFFDLLWIVGIADFVLKYITIALKCLIVALPKIILAVKSKGKFYLVIEELSQLFRSLVPIQLWYKYIMGDDSSNSYFLGGVLIVLYSLCKSFDICGRVGGVRKALKLLCTSQNYGVRATGQQCTEAGDICAICQAEFREPLILLCQHVFCEECLCLWLDRERTCPLSRSVAVDTLRCWKDGATSAHFQVY.

Residues 1-181 are Extracellular-facing; that stretch reads MWLFTVNQVL…ILLAKLCFQH (181 aa). Disordered regions lie at residues 13–41 and 92–149; these read MQRR…ASVD and PASR…PGTP. Positions 107–121 are enriched in basic residues; it reads YHHRQPHHHFHHGGH. Residues 131-140 show a composition bias toward basic and acidic residues; the sequence is GGDHRGHSEE. The chain crosses the membrane as a helical span at residues 182 to 202; that stretch reads KLGIAVCIGMASTFAYANSTL. The Cytoplasmic portion of the chain corresponds to 203 to 214; the sequence is REQVSLKEKRSV. Residues 215–235 traverse the membrane as a helical segment; it reads LVILWILAFLAGNTLYVLYTF. The Extracellular portion of the chain corresponds to 236–255; the sequence is SSQQLYNSLIFLKPNLETLD. Residues 256–276 traverse the membrane as a helical segment; that stretch reads FFDLLWIVGIADFVLKYITIA. Residues 277-329 lie on the Cytoplasmic side of the membrane; that stretch reads LKCLIVALPKIILAVKSKGKFYLVIEELSQLFRSLVPIQLWYKYIMGDDSSNS. Residues 330–350 form a helical membrane-spanning segment; it reads YFLGGVLIVLYSLCKSFDICG. Topologically, residues 351-444 are extracellular; the sequence is RVGGVRKALK…GATSAHFQVY (94 aa). An RING-type; degenerate zinc finger spans residues 384–422; the sequence is CAICQAEFREPLILLCQHVFCEECLCLWLDRERTCPLSR.

The protein resides in the membrane. In terms of biological role, E3 ubiquitin-protein ligase that negatively regulates IL3-dependent cellular responses through IL3RA ubiquitination and degradation by the proteasome, having an anti-inflammatory effect. This Pongo abelii (Sumatran orangutan) protein is RING finger and transmembrane domain-containing protein 2 (RNFT2).